We begin with the raw amino-acid sequence, 298 residues long: MDKNIIIGAMTALITPFKNGKVDEQSYARLIKRQIENGIDAVVPAGTTGESATLTHEEHRTCIEIAVEICKGTKVKVLAGAGSNATHEAVDLAKFAKEHGADGILSVAPYYNKPTQQGLYEHYKAIAQSVDTPVLLYNVPGRTGCEISTDTIIKLFRDCENIYGVKEASGNIDKCVDLLAHEPRMMLISGEDAINYPILSNGGKGVISVTSNLLPDMISALTHFALDENYKEAKKINDELYNINKILFCESNPIPIKTAMYIAGLIESLEFRLPLCSPSKENFAKIEEVMKKYKIKGF.

Threonine 48 contacts pyruvate. Tyrosine 137 functions as the Proton donor/acceptor in the catalytic mechanism. The active-site Schiff-base intermediate with substrate is the lysine 166. Isoleucine 207 provides a ligand contact to pyruvate.

The protein belongs to the DapA family. Homotetramer; dimer of dimers.

It is found in the cytoplasm. The enzyme catalyses L-aspartate 4-semialdehyde + pyruvate = (2S,4S)-4-hydroxy-2,3,4,5-tetrahydrodipicolinate + H2O + H(+). It functions in the pathway amino-acid biosynthesis; L-lysine biosynthesis via DAP pathway; (S)-tetrahydrodipicolinate from L-aspartate: step 3/4. Catalyzes the condensation of (S)-aspartate-beta-semialdehyde [(S)-ASA] and pyruvate to 4-hydroxy-tetrahydrodipicolinate (HTPA). The protein is 4-hydroxy-tetrahydrodipicolinate synthase of Campylobacter jejuni subsp. doylei (strain ATCC BAA-1458 / RM4099 / 269.97).